A 549-amino-acid chain; its full sequence is Oxygen-dependent choline dehydrogenase (549 aa).

D4–E33 is a binding site for FAD. The active-site Proton acceptor is H465.

Belongs to the GMC oxidoreductase family. It depends on FAD as a cofactor.

It catalyses the reaction choline + A = betaine aldehyde + AH2. The catalysed reaction is betaine aldehyde + NAD(+) + H2O = glycine betaine + NADH + 2 H(+). Its pathway is amine and polyamine biosynthesis; betaine biosynthesis via choline pathway; betaine aldehyde from choline (cytochrome c reductase route): step 1/1. Its function is as follows. Involved in the biosynthesis of the osmoprotectant glycine betaine. Catalyzes the oxidation of choline to betaine aldehyde and betaine aldehyde to glycine betaine at the same rate. The protein is Oxygen-dependent choline dehydrogenase of Brucella ovis (strain ATCC 25840 / 63/290 / NCTC 10512).